Reading from the N-terminus, the 327-residue chain is Cyclin-A3-3 (327 aa).

The protein belongs to the cyclin family. Cyclin AB subfamily.

The protein is Cyclin-A3-3 (CYCA3-3) of Arabidopsis thaliana (Mouse-ear cress).